We begin with the raw amino-acid sequence, 308 residues long: MGRLFGSLFHQTEELVMTPLRQRMSEDMQVRNFSLNTQLSYLRQVSLFARHFGKAPDLLGREDIRTYQVYLANEKKLAPNSIHIAIAALRFFFSVTLERDWVPAEVLPLPKKPQKLPIILSPDEVQHFLGCVLDLKHHAILTTCYAAGLRISEAVQLKPTDIDSQRMVVRVEQGKGQKDRYVMLSPKLLEILRDYWRMPRPKEWLFPGDRAGHPITRDAVGQACAKAHDLSRLSKPVTPHSLRHAFAVHLLEAGADVRTIQLLLGHRSLATTAHYLRIATNKVCATSSPFELLPRPAPTPPPAKPEYF.

One can recognise a Core-binding (CB) domain in the interval 15–97; that stretch reads LVMTPLRQRM…ALRFFFSVTL (83 aa). The Tyr recombinase domain maps to 115-288; that stretch reads KLPIILSPDE…ATNKVCATSS (174 aa). Active-site residues include R150, K175, H240, R243, and H266. Y275 (O-(3'-phospho-DNA)-tyrosine intermediate) is an active-site residue.

It belongs to the 'phage' integrase family.

Functionally, may function as an integrase. This Sinorhizobium fredii (strain NBRC 101917 / NGR234) protein is Putative integrase/recombinase y4qK.